The chain runs to 349 residues: Core protein VP7 (349 aa).

N193 and N287 each carry an N-linked (GlcNAc...) asparagine; by host glycan.

The protein belongs to the orbivirus VP7 family. Homotrimer that assemble in a complex of 260 capsomers on an inner scaffold composed of VP3.

It localises to the virion. Functionally, the VP7 protein is one of the five proteins (with VP1, VP3, VP4, and VP6) which form the inner capsid of the virus. The polypeptide is Core protein VP7 (Segment-7) (Antilocapra americana (Pronghorn)).